The following is a 387-amino-acid chain: Lipid-A-disaccharide synthase (387 aa).

The protein belongs to the LpxB family.

It catalyses the reaction 2-N,3-O-bis[(3R)-3-hydroxytetradecanoyl]-alpha-D-glucosaminyl 1-phosphate + UDP-2-N,3-O-bis[(3R)-3-hydroxytetradecanoyl]-alpha-D-glucosamine = lipid A disaccharide (E. coli) + UDP + H(+). The catalysed reaction is a lipid X + a UDP-2-N,3-O-bis[(3R)-3-hydroxyacyl]-alpha-D-glucosamine = a lipid A disaccharide + UDP + H(+). The protein operates within glycolipid biosynthesis; lipid IV(A) biosynthesis; lipid IV(A) from (3R)-3-hydroxytetradecanoyl-[acyl-carrier-protein] and UDP-N-acetyl-alpha-D-glucosamine: step 5/6. Condensation of UDP-2,3-diacylglucosamine and 2,3-diacylglucosamine-1-phosphate to form lipid A disaccharide, a precursor of lipid A, a phosphorylated glycolipid that anchors the lipopolysaccharide to the outer membrane of the cell. This chain is Lipid-A-disaccharide synthase, found in Blochmanniella pennsylvanica (strain BPEN).